The following is a 137-amino-acid chain: MEAVLTKLDQEEKKALQNFHRCAWEETKNIINDFLEIPEERCTYKFNSYTKKMELLFTPEFHTAWHEVPECREFILNFLRLISGHRVVLKGPTFVFTKETKNLGIPSTINVDFQANIENMDDLQKGNLIGKMNIKEG.

The protein belongs to the asfivirus A137R family. In terms of assembly, interacts with host TBK1.

The protein resides in the virion. It localises to the host cytoplasm. In terms of biological role, plays a role in the inhibition of the host innate immune response. Mechanistically, promotes the autophagy-mediated lysosomal degradation of host TBK1 and affects IRF3 nuclear translocation to block type I IFN production. The sequence is that of Structural protein A137R from Ornithodoros (relapsing fever ticks).